A 720-amino-acid chain; its full sequence is 1,4-alpha-glucan branching enzyme GlgB 2 (720 aa).

Catalysis depends on Asp-398, which acts as the Nucleophile. The active-site Proton donor is the Glu-451.

It belongs to the glycosyl hydrolase 13 family. GlgB subfamily. Monomer.

It catalyses the reaction Transfers a segment of a (1-&gt;4)-alpha-D-glucan chain to a primary hydroxy group in a similar glucan chain.. Its pathway is glycan biosynthesis; glycogen biosynthesis. In terms of biological role, catalyzes the formation of the alpha-1,6-glucosidic linkages in glycogen by scission of a 1,4-alpha-linked oligosaccharide from growing alpha-1,4-glucan chains and the subsequent attachment of the oligosaccharide to the alpha-1,6 position. In Xanthomonas oryzae pv. oryzae (strain KACC10331 / KXO85), this protein is 1,4-alpha-glucan branching enzyme GlgB 2.